Consider the following 382-residue polypeptide: Protein phosphatase 1A (382 aa).

A lipid anchor (N-myristoyl glycine) is attached at Gly-2. Residues 23 to 291 (RYGLSSMQGW…DNMSVILICF (269 aa)) form the PPM-type phosphatase domain. The Mn(2+) site is built by Asp-60, Gly-61, Asp-239, and Asp-282. A phosphoserine mark is found at Ser-375 and Ser-377.

It belongs to the PP2C family. In terms of assembly, monomer. Interacts with SMAD2; the interaction dephosphorylates SMAD2 in its C-terminal SXS motif resulting in disruption of the SMAD2/SMAD4 complex, SMAD2 nuclear export and termination of the TGF-beta-mediated signaling. Interacts with SMAD2; the interaction dephosphorylates SMAD2 in its C-terminal SXS motif resulting in disruption of the SMAD2/SMAD4 complex, SMAD2 nuclear export and termination of the TGF-beta-mediated signaling. Interacts with the phosphorylated form of IKBKB/IKKB. Mg(2+) serves as cofactor. It depends on Mn(2+) as a cofactor. N-myristoylation is essential for the recognition of its substrates for dephosphorylation.

The protein localises to the nucleus. The protein resides in the cytoplasm. It is found in the cytosol. It localises to the membrane. The catalysed reaction is O-phospho-L-seryl-[protein] + H2O = L-seryl-[protein] + phosphate. It carries out the reaction O-phospho-L-threonyl-[protein] + H2O = L-threonyl-[protein] + phosphate. Its function is as follows. Enzyme with a broad specificity. Negatively regulates TGF-beta signaling through dephosphorylating SMAD2 and SMAD3, resulting in their dissociation from SMAD4, nuclear export of the SMADs and termination of the TGF-beta-mediated signaling. Dephosphorylates PRKAA1 and PRKAA2. Plays an important role in the termination of TNF-alpha-mediated NF-kappa-B activation through dephosphorylating and inactivating IKBKB/IKKB. The chain is Protein phosphatase 1A (PPM1A) from Bos taurus (Bovine).